Here is a 70-residue protein sequence, read N- to C-terminus: Probable rubredoxin HupI (70 aa).

In terms of domain architecture, Rubredoxin-like spans 15 to 66 (DDRMECGICWHVYDPAEGDPVWQIPPGTPFSNLTEDWRCPNCDALQSKFMRL). Fe cation-binding residues include cysteine 20, cysteine 23, cysteine 53, and cysteine 56.

It belongs to the rubredoxin family. It depends on Fe(3+) as a cofactor.

Its function is as follows. Could be an electron transport intermediate in hydrogen oxidation. The protein is Probable rubredoxin HupI (hupI) of Rhizobium leguminosarum bv. viciae.